Reading from the N-terminus, the 330-residue chain is D-cysteine desulfhydrase (330 aa).

The residue at position 52 (lysine 52) is an N6-(pyridoxal phosphate)lysine.

Belongs to the ACC deaminase/D-cysteine desulfhydrase family. In terms of assembly, homodimer. The cofactor is pyridoxal 5'-phosphate.

It carries out the reaction D-cysteine + H2O = hydrogen sulfide + pyruvate + NH4(+) + H(+). Its function is as follows. Catalyzes the alpha,beta-elimination reaction of D-cysteine and of several D-cysteine derivatives. It could be a defense mechanism against D-cysteine. This is D-cysteine desulfhydrase from Yersinia pestis.